We begin with the raw amino-acid sequence, 64 residues long: Defensin-like protein 41 (64 aa).

The disordered stretch occupies residues 1-21 (MTQGKRKHPCDLKNPSKRAPP). 4 disulfides stabilise this stretch: cysteine 10–cysteine 61, cysteine 24–cysteine 47, cysteine 33–cysteine 56, and cysteine 37–cysteine 58.

It belongs to the DEFL family.

This is Defensin-like protein 41 from Arabidopsis thaliana (Mouse-ear cress).